Consider the following 34-residue polypeptide: Sperm protein EM1 (34 aa).

Residues 1–17 (AGSKSRSRSRSRSRSKS) show a composition bias toward basic residues. Residues 1–34 (AGSKSRSRSRSRSRSKSPAKSASPKSAASPRASR) are disordered. 7 tandem repeats follow at residues 3–4 (SK), 5–6 (SR), 7–8 (SR), 9–10 (SR), 11–12 (SR), 13–14 (SR), and 15–16 (SK). The tract at residues 3 to 16 (SKSRSRSRSRSRSK) is 7 X 2 AA tandem repeats of S-[KR]. Residues 18–34 (PAKSASPKSAASPRASR) are compositionally biased toward low complexity.

As to expression, sperm.

It localises to the nucleus. The polypeptide is Sperm protein EM1 (Ensis minor (Razor shell)).